Here is a 198-residue protein sequence, read N- to C-terminus: Pyridoxal 5'-phosphate synthase subunit PdxT (198 aa).

49–51 (GES) provides a ligand contact to L-glutamine. The active-site Nucleophile is the C81. Residues R113 and 141-142 (IR) each bind L-glutamine. Catalysis depends on charge relay system residues H177 and E179.

It belongs to the glutaminase PdxT/SNO family. In terms of assembly, in the presence of PdxS, forms a dodecamer of heterodimers. Only shows activity in the heterodimer.

The catalysed reaction is aldehydo-D-ribose 5-phosphate + D-glyceraldehyde 3-phosphate + L-glutamine = pyridoxal 5'-phosphate + L-glutamate + phosphate + 3 H2O + H(+). The enzyme catalyses L-glutamine + H2O = L-glutamate + NH4(+). It functions in the pathway cofactor biosynthesis; pyridoxal 5'-phosphate biosynthesis. Functionally, catalyzes the hydrolysis of glutamine to glutamate and ammonia as part of the biosynthesis of pyridoxal 5'-phosphate. The resulting ammonia molecule is channeled to the active site of PdxS. The chain is Pyridoxal 5'-phosphate synthase subunit PdxT from Mycobacterium tuberculosis (strain ATCC 25177 / H37Ra).